A 94-amino-acid chain; its full sequence is Co-chaperonin GroES (94 aa).

This sequence belongs to the GroES chaperonin family. As to quaternary structure, heptamer of 7 subunits arranged in a ring. Interacts with the chaperonin GroEL.

It is found in the cytoplasm. Together with the chaperonin GroEL, plays an essential role in assisting protein folding. The GroEL-GroES system forms a nano-cage that allows encapsulation of the non-native substrate proteins and provides a physical environment optimized to promote and accelerate protein folding. GroES binds to the apical surface of the GroEL ring, thereby capping the opening of the GroEL channel. The sequence is that of Co-chaperonin GroES from Lactobacillus acidophilus (strain ATCC 700396 / NCK56 / N2 / NCFM).